The sequence spans 155 residues: Small ribosomal subunit protein uS7cz/uS7cy (155 aa).

Belongs to the universal ribosomal protein uS7 family. As to quaternary structure, part of the 30S ribosomal subunit.

It is found in the plastid. In terms of biological role, one of the primary rRNA binding proteins, it binds directly to 16S rRNA where it nucleates assembly of the head domain of the 30S subunit. The sequence is that of Small ribosomal subunit protein uS7cz/uS7cy (rps7-A) from Cuscuta obtusiflora (Peruvian dodder).